Consider the following 241-residue polypeptide: Methylthioribulose-1-phosphate dehydratase (241 aa).

Cys96 provides a ligand contact to substrate. The Zn(2+) site is built by His114 and His116. The active-site Proton donor/acceptor is Glu138. Zn(2+) is bound at residue His194.

Belongs to the aldolase class II family. MtnB subfamily. As to quaternary structure, homotetramer. Interacts with APAF1. May interact with CASP1. It depends on Zn(2+) as a cofactor. In terms of tissue distribution, expressed in skeletal muscle (at protein level).

Its subcellular location is the cytoplasm. The enzyme catalyses 5-(methylsulfanyl)-D-ribulose 1-phosphate = 5-methylsulfanyl-2,3-dioxopentyl phosphate + H2O. The protein operates within amino-acid biosynthesis; L-methionine biosynthesis via salvage pathway; L-methionine from S-methyl-5-thio-alpha-D-ribose 1-phosphate: step 2/6. Catalyzes the dehydration of methylthioribulose-1-phosphate (MTRu-1-P) into 2,3-diketo-5-methylthiopentyl-1-phosphate (DK-MTP-1-P). Functions in the methionine salvage pathway, which plays a key role in cancer, apoptosis, microbial proliferation and inflammation. May inhibit the CASP1-related inflammatory response (pyroptosis), the CASP9-dependent apoptotic pathway and the cytochrome c-dependent and APAF1-mediated cell death. The sequence is that of Methylthioribulose-1-phosphate dehydratase from Mus musculus (Mouse).